Reading from the N-terminus, the 273-residue chain is Dermonecrotic toxin LhSicTox-alphaIA2biv (273 aa).

Histidine 5 is a catalytic residue. Mg(2+) is bound by residues glutamate 25 and aspartate 27. Histidine 41 serves as the catalytic Nucleophile. 2 cysteine pairs are disulfide-bonded: cysteine 45/cysteine 51 and cysteine 47/cysteine 190. Residue aspartate 85 participates in Mg(2+) binding.

This sequence belongs to the arthropod phospholipase D family. Class II subfamily. It depends on Mg(2+) as a cofactor. Expressed by the venom gland.

The protein localises to the secreted. It carries out the reaction an N-(acyl)-sphingosylphosphocholine = an N-(acyl)-sphingosyl-1,3-cyclic phosphate + choline. It catalyses the reaction an N-(acyl)-sphingosylphosphoethanolamine = an N-(acyl)-sphingosyl-1,3-cyclic phosphate + ethanolamine. The catalysed reaction is a 1-acyl-sn-glycero-3-phosphocholine = a 1-acyl-sn-glycero-2,3-cyclic phosphate + choline. The enzyme catalyses a 1-acyl-sn-glycero-3-phosphoethanolamine = a 1-acyl-sn-glycero-2,3-cyclic phosphate + ethanolamine. Its function is as follows. Dermonecrotic toxins cleave the phosphodiester linkage between the phosphate and headgroup of certain phospholipids (sphingolipid and lysolipid substrates), forming an alcohol (often choline) and a cyclic phosphate. This toxin acts on sphingomyelin (SM). It may also act on ceramide phosphoethanolamine (CPE), lysophosphatidylcholine (LPC) and lysophosphatidylethanolamine (LPE), but not on lysophosphatidylserine (LPS), and lysophosphatidylglycerol (LPG). It acts by transphosphatidylation, releasing exclusively cyclic phosphate products as second products. Induces dermonecrosis, hemolysis, increased vascular permeability, edema, inflammatory response, and platelet aggregation. The sequence is that of Dermonecrotic toxin LhSicTox-alphaIA2biv from Loxosceles hirsuta (Recluse spider).